The primary structure comprises 281 residues: Aliphatic sulfonates import ATP-binding protein SsuB (281 aa).

The ABC transporter domain maps to 40–263 (LTLRNLRKSF…RRGSADLAAL (224 aa)). 72-79 (GRSGCGKS) serves as a coordination point for ATP.

The protein belongs to the ABC transporter superfamily. Aliphatic sulfonates importer (TC 3.A.1.17.2) family. The complex is composed of two ATP-binding proteins (SsuB), two transmembrane proteins (SsuC) and a solute-binding protein (SsuA).

Its subcellular location is the cell inner membrane. The enzyme catalyses ATP + H2O + aliphatic sulfonate-[sulfonate-binding protein]Side 1 = ADP + phosphate + aliphatic sulfonateSide 2 + [sulfonate-binding protein]Side 1.. Part of the ABC transporter complex SsuABC involved in aliphatic sulfonates import. Responsible for energy coupling to the transport system. This chain is Aliphatic sulfonates import ATP-binding protein SsuB, found in Rhodopseudomonas palustris (strain BisA53).